We begin with the raw amino-acid sequence, 63 residues long: 2-hydroxymuconate tautomerase (63 aa).

The active-site Proton acceptor; via imino nitrogen is the Pro2.

The protein belongs to the 4-oxalocrotonate tautomerase family. In terms of assembly, homohexamer.

The enzyme catalyses (2Z,4E)-2-hydroxyhexa-2,4-dienedioate = (3E)-2-oxohex-3-enedioate. The protein operates within xenobiotic degradation; toluene degradation. In terms of biological role, catalyzes the ketonization of 2-hydroxymuconate stereoselectively to yield 2-oxo-3-hexenedioate. The chain is 2-hydroxymuconate tautomerase (dmpI) from Pseudomonas sp. (strain CF600).